The chain runs to 563 residues: Arginine--tRNA ligase (563 aa).

It belongs to the class-I aminoacyl-tRNA synthetase family. As to quaternary structure, monomer.

The enzyme catalyses tRNA(Arg) + L-arginine + ATP = L-arginyl-tRNA(Arg) + AMP + diphosphate. In Encephalitozoon cuniculi (strain GB-M1) (Microsporidian parasite), this protein is Arginine--tRNA ligase.